Consider the following 148-residue polypeptide: Transcriptional regulator MraZ (148 aa).

2 SpoVT-AbrB domains span residues 5 to 53 (ETAI…AEKE) and 82 to 125 (SAVL…SEQA).

Belongs to the MraZ family. Forms oligomers.

It is found in the cytoplasm. The protein resides in the nucleoid. In Xanthomonas axonopodis pv. citri (strain 306), this protein is Transcriptional regulator MraZ.